The following is a 623-amino-acid chain: DNA polymerase alpha subunit B (623 aa).

Residues isoleucine 113–phenylalanine 151 form a disordered region. Positions serine 121–arginine 130 are enriched in polar residues.

Belongs to the DNA polymerase alpha subunit B family. As to quaternary structure, DNA polymerase alpha:primase is a four subunit enzyme complex, which is assembled throughout the cell cycle, and consists of the two DNA polymerase subunits A and B, and the DNA primase large and small subunits. Subunit B binds to subunit A.

The protein resides in the nucleus. Its function is as follows. May play an essential role at the early stage of chromosomal DNA replication by coupling the polymerase alpha/primase complex to the cellular replication machinery. The chain is DNA polymerase alpha subunit B (polA2) from Dictyostelium discoideum (Social amoeba).